The following is a 376-amino-acid chain: Chaperone protein DnaJ (376 aa).

The 66-residue stretch at 5 to 70 folds into the J domain; sequence DYYEVLGVAK…QKRAAYDQYG (66 aa). A CR-type zinc finger spans residues 136–214; the sequence is GYDTQIRVPS…CHGSGKVKET (79 aa). Residues C149, C152, C166, C169, C188, C191, C202, and C205 each contribute to the Zn(2+) site. CXXCXGXG motif repeat units lie at residues 149–156, 166–173, 188–195, and 202–209; these read CEVCHGSG, CPTCHGQG, CPKCHGTG, and CAHCHGSG.

The protein belongs to the DnaJ family. Homodimer. Requires Zn(2+) as cofactor.

The protein resides in the cytoplasm. Its function is as follows. Participates actively in the response to hyperosmotic and heat shock by preventing the aggregation of stress-denatured proteins and by disaggregating proteins, also in an autonomous, DnaK-independent fashion. Unfolded proteins bind initially to DnaJ; upon interaction with the DnaJ-bound protein, DnaK hydrolyzes its bound ATP, resulting in the formation of a stable complex. GrpE releases ADP from DnaK; ATP binding to DnaK triggers the release of the substrate protein, thus completing the reaction cycle. Several rounds of ATP-dependent interactions between DnaJ, DnaK and GrpE are required for fully efficient folding. Also involved, together with DnaK and GrpE, in the DNA replication of plasmids through activation of initiation proteins. This Burkholderia multivorans (strain ATCC 17616 / 249) protein is Chaperone protein DnaJ.